The chain runs to 379 residues: uncharacterized protein (379 aa).

This sequence belongs to the glycosyltransferase 28 family.

This is an uncharacterized protein from Methanosarcina mazei (strain ATCC BAA-159 / DSM 3647 / Goe1 / Go1 / JCM 11833 / OCM 88) (Methanosarcina frisia).